The primary structure comprises 431 residues: MAQKIQSVKGMNDLLPVEQKDFKLTAAFWQAFEDTVGRWTRTYGYQQIRTPIVEQTGLFVRSIGEETDVVGKEMYTFSDSNDSLSLSLRPEGTASCLRAVVEHNFLYNSPQKLWYMGPMFRRERPQKGRYRQFHQVGIEALGFEGPDIDAEIIAMSADLWEKLGIREYLTLEINSLGNREERAAHRAALVEYLTRYEDKLDEDSKRRLKTNPLRVLDTKNPDLQEICNAAPRLVDYLGEASQNHYARFKAMLDGLGIQYIENPRLVRGLDYYNQTVFEWTTDKLGAQATVCGGGRYDGLIEELGGKPAPSIGFAMGIERLLLLVSEYGSLEVNAAPDVYAMHQGEGADLQVMKYAQALRAQGFNVMQHSGYQSLKAQMKKADNSGARFALIVAQDELANGTVTLKDMNGAHDQQTVAAADLTNTLQQWKNA.

It belongs to the class-II aminoacyl-tRNA synthetase family. As to quaternary structure, homodimer.

Its subcellular location is the cytoplasm. It catalyses the reaction tRNA(His) + L-histidine + ATP = L-histidyl-tRNA(His) + AMP + diphosphate + H(+). The polypeptide is Histidine--tRNA ligase (Neisseria meningitidis serogroup A / serotype 4A (strain DSM 15465 / Z2491)).